The sequence spans 384 residues: Glucose-fructose oxidoreductase domain-containing protein 2 (384 aa).

An N-terminal signal peptide occupies residues 1 to 25 (MMTLPGIGVFGTGNTARVLIQLLRA). Residues 358–384 (GEWESVELTNEETDSNQNLSEVIQHNL) form a disordered region. A compositionally biased stretch (polar residues) spans 372–384 (SNQNLSEVIQHNL).

Belongs to the Gfo/Idh/MocA family.

The protein resides in the secreted. It localises to the extracellular space. Its subcellular location is the extracellular matrix. In terms of biological role, promotes matrix assembly. The sequence is that of Glucose-fructose oxidoreductase domain-containing protein 2 (gfod2) from Xenopus laevis (African clawed frog).